A 286-amino-acid chain; its full sequence is Phycobilisome 32.1 kDa linker polypeptide, phycocyanin-associated, rod (286 aa).

The region spanning 2 to 180 (AITTAASRLG…LYRGYANSDR (179 aa)) is the PBS-linker domain. Positions 234–286 (DRVYRLEVTGIRSPGYPSVRRSSTVFIVPYERLSDKIQQVHKQGGKIVSVTSA) constitute a CpcD-like domain.

The protein belongs to the phycobilisome linker protein family. Associated with the phycobilisome, a hemidiscoidal structure that is composed of two distinct substructures: a core complex and a number of rods radiating from the core.

It is found in the cellular thylakoid membrane. Rod linker protein, associated with phycocyanin. Linker polypeptides determine the state of aggregation and the location of the disk-shaped phycobiliprotein units within the phycobilisome and modulate their spectroscopic properties in order to mediate a directed and optimal energy transfer. This is Phycobilisome 32.1 kDa linker polypeptide, phycocyanin-associated, rod (cpcC) from Nostoc sp. (strain PCC 7120 / SAG 25.82 / UTEX 2576).